We begin with the raw amino-acid sequence, 125 residues long: Small ribosomal subunit protein uS12 (125 aa).

Positions 9–31 (RQGREVEKIKSKSPAMENSPQRR) are disordered. D89 is subject to 3-methylthioaspartic acid.

The protein belongs to the universal ribosomal protein uS12 family. In terms of assembly, part of the 30S ribosomal subunit. Contacts proteins S8 and S17. May interact with IF1 in the 30S initiation complex.

With S4 and S5 plays an important role in translational accuracy. Functionally, interacts with and stabilizes bases of the 16S rRNA that are involved in tRNA selection in the A site and with the mRNA backbone. Located at the interface of the 30S and 50S subunits, it traverses the body of the 30S subunit contacting proteins on the other side and probably holding the rRNA structure together. The combined cluster of proteins S8, S12 and S17 appears to hold together the shoulder and platform of the 30S subunit. This chain is Small ribosomal subunit protein uS12, found in Verminephrobacter eiseniae (strain EF01-2).